The sequence spans 428 residues: ATP-dependent RNA helicase RhlB (428 aa).

The short motif at 9–37 is the Q motif element; sequence KKFSDFALHPKVIEALDNKGFSNCTPIQA. A Helicase ATP-binding domain is found at 40-219; it reads LPFTVEGRDV…FEQMNHAEYI (180 aa). ATP is bound at residue 53-60; the sequence is AQTGTGKT. A DEAD box motif is present at residues 165 to 168; it reads DEAD. In terms of domain architecture, Helicase C-terminal spans 245-390; sequence RLLQTLLEEE…VSKYNSQALL (146 aa). The tract at residues 392-428 is disordered; that stretch reads DLPAPKRRYRSRSGNHQRRNNLSHRNNTPRNNRKRSG. The segment covering 396-413 has biased composition (basic residues); sequence PKRRYRSRSGNHQRRNNL.

Belongs to the DEAD box helicase family. RhlB subfamily. Component of the RNA degradosome, which is a multiprotein complex involved in RNA processing and mRNA degradation.

It localises to the cytoplasm. The catalysed reaction is ATP + H2O = ADP + phosphate + H(+). Functionally, DEAD-box RNA helicase involved in RNA degradation. Has RNA-dependent ATPase activity and unwinds double-stranded RNA. In Photorhabdus laumondii subsp. laumondii (strain DSM 15139 / CIP 105565 / TT01) (Photorhabdus luminescens subsp. laumondii), this protein is ATP-dependent RNA helicase RhlB.